We begin with the raw amino-acid sequence, 473 residues long: Zinc finger and SCAN domain-containing protein 21 (473 aa).

Residue K27 forms a Glycyl lysine isopeptide (Lys-Gly) (interchain with G-Cter in SUMO2) linkage. An SCAN box domain is found at 45 to 127 (RQRFRQFGYH…TLLEDLEREL (83 aa)). A disordered region spans residues 127–171 (LDEPGHQVSTPPNEQKPVWEKISSSGTAKESPSSMQPQPLETSHN). Polar residues predominate over residues 148–171 (ISSSGTAKESPSSMQPQPLETSHN). Glycyl lysine isopeptide (Lys-Gly) (interchain with G-Cter in SUMO2) cross-links involve residues K221 and K232. Residues 244 to 272 (LENEKGTKPPLQEAGSKKGRESVPTKPTP) are disordered. Residues 258–272 (GSKKGRESVPTKPTP) are compositionally biased toward basic and acidic residues. 7 C2H2-type zinc fingers span residues 277-299 (YICA…RRTH), 305-327 (YVCT…YRTH), 333-354 (YDCK…QRMH), 360-382 (YQCK…YRIH), 388-410 (YQCN…QRLH), 416-438 (YKCK…HRIH), and 444-466 (YWCH…QRVH). K349 is covalently cross-linked (Glycyl lysine isopeptide (Lys-Gly) (interchain with G-Cter in SUMO2)).

The protein belongs to the krueppel C2H2-type zinc-finger protein family.

It localises to the nucleus. In terms of biological role, strong transcriptional activator. Plays an important role in spermatogenesis; essential for the progression of meiotic prophase I in spermatocytes. In Gorilla gorilla gorilla (Western lowland gorilla), this protein is Zinc finger and SCAN domain-containing protein 21 (ZSCAN21).